The following is a 200-amino-acid chain: Recombination protein RecR (200 aa).

The segment at 57–72 (CRQCRTLTEQELCPQC) adopts a C4-type zinc-finger fold. The Toprim domain maps to 80-175 (TQLCVVEGPV…TATRIAHGVP (96 aa)).

Belongs to the RecR family.

Its function is as follows. May play a role in DNA repair. It seems to be involved in an RecBC-independent recombinational process of DNA repair. It may act with RecF and RecO. In Pseudomonas entomophila (strain L48), this protein is Recombination protein RecR.